The chain runs to 838 residues: Protein P (838 aa).

The tract at residues 1–179 (MPLSYQHFRK…FCGSPYSWEQ (179 aa)) is terminal protein domain (TP). The spacer stretch occupies residues 180-341 (ELQHSQRHGD…YCLSHLVNLR (162 aa)). The disordered stretch occupies residues 219-245 (GLQPHQGPLASSQPGRSGSIRARAHPS). The polymerase/reverse transcriptase domain (RT) stretch occupies residues 342–685 (EDWGPCDDHG…YMNLYPVARQ (344 aa)). The 244-residue stretch at 352–595 (EHHIRIPRTP…YSLNFMGYII (244 aa)) folds into the Reverse transcriptase domain. Mg(2+)-binding residues include D424, D546, and D547.

It belongs to the hepadnaviridae P protein family.

It carries out the reaction DNA(n) + a 2'-deoxyribonucleoside 5'-triphosphate = DNA(n+1) + diphosphate. The catalysed reaction is Endonucleolytic cleavage to 5'-phosphomonoester.. Its activity is regulated as follows. Activated by host HSP70 and HSP40 in vitro to be able to bind the epsilon loop of the pgRNA. Because deletion of the RNase H region renders the protein partly chaperone-independent, the chaperones may be needed indirectly to relieve occlusion of the RNA-binding site by this domain. Inhibited by several reverse-transcriptase inhibitors: Lamivudine, Adefovir and Entecavir. Functionally, multifunctional enzyme that converts the viral RNA genome into dsDNA in viral cytoplasmic capsids. This enzyme displays a DNA polymerase activity that can copy either DNA or RNA templates, and a ribonuclease H (RNase H) activity that cleaves the RNA strand of RNA-DNA heteroduplexes in a partially processive 3'- to 5'-endonucleasic mode. Neo-synthesized pregenomic RNA (pgRNA) are encapsidated together with the P protein, and reverse-transcribed inside the nucleocapsid. Initiation of reverse-transcription occurs first by binding the epsilon loop on the pgRNA genome, and is initiated by protein priming, thereby the 5'-end of (-)DNA is covalently linked to P protein. Partial (+)DNA is synthesized from the (-)DNA template and generates the relaxed circular DNA (RC-DNA) genome. After budding and infection, the RC-DNA migrates in the nucleus, and is converted into a plasmid-like covalently closed circular DNA (cccDNA). The activity of P protein does not seem to be necessary for cccDNA generation, and is presumably released from (+)DNA by host nuclear DNA repair machinery. This Hepatitis B virus genotype A2 subtype adw (isolate Japan/Nishioka/1983) (HBV-A) protein is Protein P.